The chain runs to 593 residues: Metal-response element-binding transcription factor 2 (593 aa).

Positions 1–35 are disordered; the sequence is MRDSTGAGNSLVHKRSPLRRNQKTPTSLTKLSLQD. Over residues 12–22 the composition is skewed to basic residues; the sequence is VHKRSPLRRNQ. Polar residues predominate over residues 23–32; it reads KTPTSLTKLS. A Phosphothreonine modification is found at Thr24. The Tudor domain maps to 44-101; the sequence is CKFEEGQDVLARWSDGLFYLGTIKKINILKQSCFIIFEDSSKSWVLWKDIQTGATGSG. 2 PHD-type zinc fingers span residues 102–157 and 201–255; these read EMVC…CVFA and QCYC…CSSG. Residue Lys360 forms a Glycyl lysine isopeptide (Lys-Gly) (interchain with G-Cter in SUMO2) linkage. Over residues 360–374 the composition is skewed to basic and acidic residues; the sequence is KAEKEPEGTSHEFKI. Disordered regions lie at residues 360–411 and 424–486; these read KAEK…PYTR and KESI…TRTG. Positions 445-454 are enriched in polar residues; it reads TAHSSNTSDV. Ser452 bears the Phosphoserine mark. The span at 459-471 shows a compositional bias: low complexity; the sequence is ASSAKETTSSSIS. A Glycyl lysine isopeptide (Lys-Gly) (interchain with G-Cter in SUMO2) cross-link involves residue Lys522.

This sequence belongs to the Polycomblike family. Associates with the PRC2 complex, which consists of the core components EED, EZH1 or EZH2, SUZ12, and RBBP4, and various combinations of accessory subunits including AEBP2, JARID2, PHF19, MTF2 and EPOP. Forms a dimeric PRC2.1 (class 1, PRC-PCL) complex consisting of at least SUZ12, RBBP4, and PHF19 or MTF2; PHF19 and MTF2 stabilize the dimeric structure which enhances PRC2 interaction with chromatin.

Its subcellular location is the nucleus. Functionally, polycomb group (PcG) protein that specifically binds histone H3 trimethylated at 'Lys-36' (H3K36me3) and recruits the PRC2 complex, thus enhancing PRC2 H3K27me3 methylation activity. Regulates the transcriptional networks during embryonic stem cell self-renewal and differentiation. Promotes recruitment of the PRC2 complex to the inactive X chromosome in differentiating XX ES cells and PRC2 recruitment to target genes in undifferentiated ES cells. Required to repress Hox genes by enhancing H3K27me3 methylation of the PRC2 complex. In some conditions may act as an inhibitor of PRC2 activity: able to activate the CDKN2A gene and promote cellular senescence by suppressing the catalytic activity of the PRC2 complex locally. Binds to the metal-regulating-element (MRE) of MT1A gene promoter. In Homo sapiens (Human), this protein is Metal-response element-binding transcription factor 2 (MTF2).